A 493-amino-acid polypeptide reads, in one-letter code: Acetylcholine receptor subunit epsilon (493 aa).

A signal peptide spans 1-20 (MARAPLGVLLLLGLLGRGVG). Over 21 to 239 (KNEELRLYHH…VIYSLIIRRK (219 aa)) the chain is Extracellular. Residues Asn86 and Asn161 are each glycosylated (N-linked (GlcNAc...) asparagine). A disulfide bridge links Cys148 with Cys162. Residues 240–264 (PLFYVINIIVPCVLISGLVLLAYFL) traverse the membrane as a helical segment. Residues 265-272 (PAQAGGQK) lie on the Cytoplasmic side of the membrane. A helical membrane pass occupies residues 273-291 (CTVSINVLLAQTVFLFLIA). Residues 292–306 (QKIPETSLSVPLLGR) are Extracellular-facing. A helical membrane pass occupies residues 307–328 (FLIFVMVVATLIVMNCVIVLNV). Residues 329–456 (SQRTPTTHAM…WVRMGNALDN (128 aa)) lie on the Cytoplasmic side of the membrane. The helical transmembrane segment at 457-480 (ICFWAALVLFSVGSSLIFLGAYFN) threads the bilayer. Over 481–493 (RVPDLPYAPCIQP) the chain is Extracellular.

This sequence belongs to the ligand-gated ion channel (TC 1.A.9) family. Acetylcholine receptor (TC 1.A.9.1) subfamily. Epsilon/CHRNE sub-subfamily. As to quaternary structure, pentamer of two alpha chains, and one each of the beta, delta, and gamma (in immature muscle) or epsilon (in mature muscle) chains. The muscle heteropentamer composed of alpha-1, beta-1, delta, epsilon subunits interacts with the alpha-conotoxin ImII.

Its subcellular location is the postsynaptic cell membrane. It is found in the cell membrane. It catalyses the reaction K(+)(in) = K(+)(out). The catalysed reaction is Na(+)(in) = Na(+)(out). After binding acetylcholine, the AChR responds by an extensive change in conformation that affects all subunits and leads to opening of an ion-conducting channel across the plasma membrane. The sequence is that of Acetylcholine receptor subunit epsilon from Homo sapiens (Human).